The primary structure comprises 207 residues: Large ribosomal subunit protein uL18 (207 aa).

The protein belongs to the universal ribosomal protein uL18 family. Part of the 50S ribosomal subunit. Contacts the 5S and 23S rRNAs.

Functionally, this is one of the proteins that bind and probably mediate the attachment of the 5S RNA into the large ribosomal subunit, where it forms part of the central protuberance. The protein is Large ribosomal subunit protein uL18 of Caldivirga maquilingensis (strain ATCC 700844 / DSM 13496 / JCM 10307 / IC-167).